A 267-amino-acid polypeptide reads, in one-letter code: 4-hydroxy-tetrahydrodipicolinate reductase (267 aa).

NAD(+)-binding positions include 8–13 (GAAGRM) and Asp34. Arg35 lines the NADP(+) pocket. Residues 98-100 (GTT) and 122-125 (AANF) each bind NAD(+). His155 functions as the Proton donor/acceptor in the catalytic mechanism. Position 156 (His156) interacts with (S)-2,3,4,5-tetrahydrodipicolinate. Lys159 functions as the Proton donor in the catalytic mechanism. 165–166 (GT) is a (S)-2,3,4,5-tetrahydrodipicolinate binding site.

It belongs to the DapB family.

The protein resides in the cytoplasm. It catalyses the reaction (S)-2,3,4,5-tetrahydrodipicolinate + NAD(+) + H2O = (2S,4S)-4-hydroxy-2,3,4,5-tetrahydrodipicolinate + NADH + H(+). The catalysed reaction is (S)-2,3,4,5-tetrahydrodipicolinate + NADP(+) + H2O = (2S,4S)-4-hydroxy-2,3,4,5-tetrahydrodipicolinate + NADPH + H(+). It participates in amino-acid biosynthesis; L-lysine biosynthesis via DAP pathway; (S)-tetrahydrodipicolinate from L-aspartate: step 4/4. Catalyzes the conversion of 4-hydroxy-tetrahydrodipicolinate (HTPA) to tetrahydrodipicolinate. The protein is 4-hydroxy-tetrahydrodipicolinate reductase of Pseudomonas putida (strain ATCC 47054 / DSM 6125 / CFBP 8728 / NCIMB 11950 / KT2440).